Here is a 446-residue protein sequence, read N- to C-terminus: Na(+)-translocating NADH-quinone reductase subunit A (446 aa).

The protein belongs to the NqrA family. In terms of assembly, composed of six subunits; NqrA, NqrB, NqrC, NqrD, NqrE and NqrF.

The catalysed reaction is a ubiquinone + n Na(+)(in) + NADH + H(+) = a ubiquinol + n Na(+)(out) + NAD(+). Its function is as follows. NQR complex catalyzes the reduction of ubiquinone-1 to ubiquinol by two successive reactions, coupled with the transport of Na(+) ions from the cytoplasm to the periplasm. NqrA to NqrE are probably involved in the second step, the conversion of ubisemiquinone to ubiquinol. This chain is Na(+)-translocating NADH-quinone reductase subunit A, found in Histophilus somni (strain 129Pt) (Haemophilus somnus).